Consider the following 290-residue polypeptide: 33 kDa chaperonin (290 aa).

Intrachain disulfides connect cysteine 235/cysteine 237 and cysteine 268/cysteine 271.

This sequence belongs to the HSP33 family. Under oxidizing conditions two disulfide bonds are formed involving the reactive cysteines. Under reducing conditions zinc is bound to the reactive cysteines and the protein is inactive.

Its subcellular location is the cytoplasm. Its function is as follows. Redox regulated molecular chaperone. Protects both thermally unfolding and oxidatively damaged proteins from irreversible aggregation. Plays an important role in the bacterial defense system toward oxidative stress. The protein is 33 kDa chaperonin of Streptococcus uberis (strain ATCC BAA-854 / 0140J).